We begin with the raw amino-acid sequence, 477 residues long: Octopamine receptor (477 aa).

Residues 1 to 55 are Extracellular-facing; the sequence is MGQAATHVDANYTLINYTEEVIEDDRDACAVADDPKYPSSFGITLAVPEWEAICT. N-linked (GlcNAc...) asparagine glycosylation is found at asparagine 11 and asparagine 16. A helical membrane pass occupies residues 56-78; the sequence is AIVLTLIIISTIVGNILVILSVF. At 79–88 the chain is on the cytoplasmic side; that stretch reads TYKPLRIVQN. The chain crosses the membrane as a helical span at residues 89–110; it reads FFIVSLAVADLTVAILVLPLNV. The Extracellular portion of the chain corresponds to 111 to 127; the sequence is AYSILGQWVFGIYVCKM. Residues 128–148 form a helical membrane-spanning segment; the sequence is WLTCDIMCCTSSILNLCAIAL. At 149–168 the chain is on the cytoplasmic side; sequence DRYWAITDPINYAQKRTLER. Residues 169 to 191 form a helical membrane-spanning segment; that stretch reads VLLMIGVVWVLSLIISSPPLLGW. The Extracellular segment spans residues 192–216; sequence NDWPDVFEPDTPCRLTSQPGFVIFS. Residues 217–238 traverse the membrane as a helical segment; it reads SSGSFYIPLVIMTVVYFEIYLA. Residues 239–405 are Cytoplasmic-facing; the sequence is TKKRLRDRAK…LTRERRAART (167 aa). Disordered stretches follow at residues 256 to 317 and 334 to 358; these read SSGQ…SKDD and VTDMGENLENRNTSSESNSKETHED. Basic and acidic residues-rich tracts occupy residues 263–272 and 279–295; these read NNKDDHHDQD and NHNEHQGVTRLVSDNEK. The span at 296-312 shows a compositional bias: basic residues; sequence KKRTRKLTPKKKPKRKY. A helical membrane pass occupies residues 406–427; the sequence is LGIIMGVFVVCWLPFFVIYLVI. The Extracellular portion of the chain corresponds to 428 to 439; sequence PFCASCCLSNKF. Residues 440–460 traverse the membrane as a helical segment; the sequence is INFITWLGYCNSALNPLIYTI. Residues 461–477 are Cytoplasmic-facing; it reads FNMDFRRAFKKLLCMKP.

The protein belongs to the G-protein coupled receptor 1 family.

The protein resides in the cell membrane. Its function is as follows. Receptor for octopamine. Octopamine (OA) is a neurotransmitter, neurohormone, and neuromodulator in invertebrates. The activity of this receptor is mediated by G proteins which activate adenylyl cyclase. The sequence is that of Octopamine receptor from Heliothis virescens (Tobacco budworm moth).